The chain runs to 385 residues: Mannitol-1-phosphate 5-dehydrogenase (385 aa).

NAD(+) is bound at residue 3-14 (ALQFGAGNIGRG).

The protein belongs to the mannitol dehydrogenase family.

The catalysed reaction is D-mannitol 1-phosphate + NAD(+) = beta-D-fructose 6-phosphate + NADH + H(+). The polypeptide is Mannitol-1-phosphate 5-dehydrogenase (mtlD) (Buchnera aphidicola subsp. Acyrthosiphon pisum (strain APS) (Acyrthosiphon pisum symbiotic bacterium)).